Here is a 367-residue protein sequence, read N- to C-terminus: Glutamate 5-kinase (367 aa).

Lys-9 serves as a coordination point for ATP. Residues Ser-49, Asp-136, and Asn-148 each contribute to the substrate site. Residues Thr-168–Asp-169 and Thr-210–Lys-216 each bind ATP. The PUA domain maps to Ser-276–Arg-350.

This sequence belongs to the glutamate 5-kinase family.

Its subcellular location is the cytoplasm. It catalyses the reaction L-glutamate + ATP = L-glutamyl 5-phosphate + ADP. The protein operates within amino-acid biosynthesis; L-proline biosynthesis; L-glutamate 5-semialdehyde from L-glutamate: step 1/2. Catalyzes the transfer of a phosphate group to glutamate to form L-glutamate 5-phosphate. The polypeptide is Glutamate 5-kinase (Bacillus cereus (strain ATCC 10987 / NRS 248)).